Reading from the N-terminus, the 394-residue chain is Tryptophan synthase beta chain (394 aa).

K84 carries the N6-(pyridoxal phosphate)lysine modification.

Belongs to the TrpB family. In terms of assembly, tetramer of two alpha and two beta chains. Pyridoxal 5'-phosphate is required as a cofactor.

The enzyme catalyses (1S,2R)-1-C-(indol-3-yl)glycerol 3-phosphate + L-serine = D-glyceraldehyde 3-phosphate + L-tryptophan + H2O. Its pathway is amino-acid biosynthesis; L-tryptophan biosynthesis; L-tryptophan from chorismate: step 5/5. Its function is as follows. The beta subunit is responsible for the synthesis of L-tryptophan from indole and L-serine. This chain is Tryptophan synthase beta chain, found in Clostridium acetobutylicum (strain ATCC 824 / DSM 792 / JCM 1419 / IAM 19013 / LMG 5710 / NBRC 13948 / NRRL B-527 / VKM B-1787 / 2291 / W).